The primary structure comprises 207 residues: Guanylate kinase (207 aa).

The Guanylate kinase-like domain maps to 5-185 (GFVLLISGPS…SYEALRAILI (181 aa)). Position 12–19 (12–19 (GPSGAGKS)) interacts with ATP.

Belongs to the guanylate kinase family.

The protein localises to the cytoplasm. It carries out the reaction GMP + ATP = GDP + ADP. Essential for recycling GMP and indirectly, cGMP. The protein is Guanylate kinase (gmk) of Campylobacter jejuni subsp. jejuni serotype O:2 (strain ATCC 700819 / NCTC 11168).